Here is a 96-residue protein sequence, read N- to C-terminus: Putative pterin-4-alpha-carbinolamine dehydratase (96 aa).

It belongs to the pterin-4-alpha-carbinolamine dehydratase family.

It carries out the reaction (4aS,6R)-4a-hydroxy-L-erythro-5,6,7,8-tetrahydrobiopterin = (6R)-L-erythro-6,7-dihydrobiopterin + H2O. The protein is Putative pterin-4-alpha-carbinolamine dehydratase of Prochlorococcus marinus subsp. pastoris (strain CCMP1986 / NIES-2087 / MED4).